The following is a 342-amino-acid chain: Nucleoid-associated protein Sfri_2491 (342 aa).

Belongs to the YejK family.

It is found in the cytoplasm. The protein resides in the nucleoid. The chain is Nucleoid-associated protein Sfri_2491 from Shewanella frigidimarina (strain NCIMB 400).